A 623-amino-acid polypeptide reads, in one-letter code: Chaperone protein HtpG (623 aa).

The a; substrate-binding stretch occupies residues 1 to 336 (MVSKQQTMGF…ASDLPLNISR (336 aa)). Residues 337 to 550 (EILQDNKQVE…EQDMGLEMQR (214 aa)) are b. A c region spans residues 551 to 623 (ILQAAGQQIP…NRVNRLLVSS (73 aa)).

This sequence belongs to the heat shock protein 90 family. Homodimer.

It localises to the cytoplasm. In terms of biological role, molecular chaperone. Has ATPase activity. The chain is Chaperone protein HtpG from Legionella pneumophila (strain Lens).